The primary structure comprises 240 residues: MRCRRLCAFDAARGPRRLMRVGLALILVGHVNLLLGAVLHGTVLRHVANPRGAVTPEYTTANVISVGSGLLSVSLGLVALLASRNLFRPRLHWALLALALVNLLLSAACSLGLLLAVSLTVANGGRRLIADCHPGLLDPLVPLDQGSGHADCPFDPTKIYDTALALWIPSVFMSAAEAALSGYCCVAALTLRGVGPCRKDGLQEQLEELTELEFPKRKWQENVQLLDQTREIRTSQKSWV.

4 helical membrane-spanning segments follow: residues 21–41, 63–83, 95–115, and 163–183; these read VGLA…VLHG, VISV…LLAS, LLAL…GLLL, and ALAL…LSGY.

This sequence belongs to the TMEM54 family.

The protein resides in the membrane. The polypeptide is Keratinocyte-associated protein 3 (KRTCAP3) (Bos taurus (Bovine)).